Consider the following 276-residue polypeptide: Rhamnulose-1-phosphate aldolase (276 aa).

Glu-117 is an active-site residue. Zn(2+) is bound by residues His-141, His-143, and His-212.

This sequence belongs to the aldolase class II family. RhaD subfamily. Homotetramer. Zn(2+) is required as a cofactor.

It is found in the cytoplasm. The catalysed reaction is L-rhamnulose 1-phosphate = (S)-lactaldehyde + dihydroxyacetone phosphate. Its pathway is carbohydrate degradation; L-rhamnose degradation; glycerone phosphate from L-rhamnose: step 3/3. Its function is as follows. Catalyzes the reversible cleavage of L-rhamnulose-1-phosphate to dihydroxyacetone phosphate (DHAP) and L-lactaldehyde. This Klebsiella pneumoniae (strain 342) protein is Rhamnulose-1-phosphate aldolase.